Reading from the N-terminus, the 329-residue chain is DNA-directed RNA polymerase subunit alpha (329 aa).

The alpha N-terminal domain (alpha-NTD) stretch occupies residues 1 to 231 (MSILSFQMPE…KHFMLFSDQT (231 aa)). The segment at 247-329 (EEFLHMRKLL…DTAKYKLDED (83 aa)) is alpha C-terminal domain (alpha-CTD).

This sequence belongs to the RNA polymerase alpha chain family. In terms of assembly, homodimer. The RNAP catalytic core consists of 2 alpha, 1 beta, 1 beta' and 1 omega subunit. When a sigma factor is associated with the core the holoenzyme is formed, which can initiate transcription.

It catalyses the reaction RNA(n) + a ribonucleoside 5'-triphosphate = RNA(n+1) + diphosphate. Functionally, DNA-dependent RNA polymerase catalyzes the transcription of DNA into RNA using the four ribonucleoside triphosphates as substrates. The sequence is that of DNA-directed RNA polymerase subunit alpha from Cytophaga hutchinsonii (strain ATCC 33406 / DSM 1761 / CIP 103989 / NBRC 15051 / NCIMB 9469 / D465).